We begin with the raw amino-acid sequence, 370 residues long: D-alanine--D-alanine ligase (370 aa).

The ATP-grasp domain maps to Lys-144–Asp-352. Residue Glu-177–Glu-232 participates in ATP binding. Mg(2+) contacts are provided by Asp-306, Glu-319, and Asn-321.

It belongs to the D-alanine--D-alanine ligase family. Mg(2+) is required as a cofactor. Mn(2+) serves as cofactor.

It localises to the cytoplasm. It carries out the reaction 2 D-alanine + ATP = D-alanyl-D-alanine + ADP + phosphate + H(+). The protein operates within cell wall biogenesis; peptidoglycan biosynthesis. Its function is as follows. Cell wall formation. The polypeptide is D-alanine--D-alanine ligase (Listeria monocytogenes serovar 1/2a (strain ATCC BAA-679 / EGD-e)).